A 415-amino-acid polypeptide reads, in one-letter code: Lipoyl synthase, mitochondrial (415 aa).

A mitochondrion-targeting transit peptide spans 1-32 (MAASTNRLRFLYSSARTVPQTGSITPISRRTY). The span at 22 to 32 (GSITPISRRTY) shows a compositional bias: polar residues. The segment at 22-53 (GSITPISRRTYATTEPSPSATGAPATARKRTN) is disordered. Low complexity predominate over residues 33–47 (ATTEPSPSATGAPAT). Cys-132, Cys-137, Cys-143, Cys-163, Cys-167, Cys-170, and Ser-378 together coordinate [4Fe-4S] cluster. One can recognise a Radical SAM core domain in the interval 146 to 367 (GSDKSAATAT…RQRALDMGFL (222 aa)). Residues 395–415 (AAGTAGESVTDSKAAVDEATR) form a disordered region.

Belongs to the radical SAM superfamily. Lipoyl synthase family. It depends on [4Fe-4S] cluster as a cofactor.

The protein localises to the mitochondrion. It catalyses the reaction [[Fe-S] cluster scaffold protein carrying a second [4Fe-4S](2+) cluster] + N(6)-octanoyl-L-lysyl-[protein] + 2 oxidized [2Fe-2S]-[ferredoxin] + 2 S-adenosyl-L-methionine + 4 H(+) = [[Fe-S] cluster scaffold protein] + N(6)-[(R)-dihydrolipoyl]-L-lysyl-[protein] + 4 Fe(3+) + 2 hydrogen sulfide + 2 5'-deoxyadenosine + 2 L-methionine + 2 reduced [2Fe-2S]-[ferredoxin]. It functions in the pathway protein modification; protein lipoylation via endogenous pathway; protein N(6)-(lipoyl)lysine from octanoyl-[acyl-carrier-protein]: step 2/2. Its function is as follows. Catalyzes the radical-mediated insertion of two sulfur atoms into the C-6 and C-8 positions of the octanoyl moiety bound to the lipoyl domains of lipoate-dependent enzymes, thereby converting the octanoylated domains into lipoylated derivatives. The protein is Lipoyl synthase, mitochondrial of Aspergillus oryzae (strain ATCC 42149 / RIB 40) (Yellow koji mold).